The following is a 211-amino-acid chain: N-(5'-phosphoribosyl)anthranilate isomerase (211 aa).

The protein belongs to the TrpF family.

It catalyses the reaction N-(5-phospho-beta-D-ribosyl)anthranilate = 1-(2-carboxyphenylamino)-1-deoxy-D-ribulose 5-phosphate. The protein operates within amino-acid biosynthesis; L-tryptophan biosynthesis; L-tryptophan from chorismate: step 3/5. This is N-(5'-phosphoribosyl)anthranilate isomerase from Zymomonas mobilis subsp. mobilis (strain ATCC 31821 / ZM4 / CP4).